Consider the following 426-residue polypeptide: Probable imidazolonepropionase (426 aa).

4-imidazolone-5-propanoate-binding residues include Tyr159 and His192. Tyr159 contacts N-formimidoyl-L-glutamate. A Fe(3+)-binding site is contributed by His260. A Zn(2+)-binding site is contributed by His260. 4-imidazolone-5-propanoate is bound at residue Glu263. Asp334 is a binding site for Fe(3+). Asp334 lines the Zn(2+) pocket. Asn336 contacts N-formimidoyl-L-glutamate.

The protein belongs to the metallo-dependent hydrolases superfamily. HutI family. Requires Zn(2+) as cofactor. Fe(3+) serves as cofactor.

The enzyme catalyses 4-imidazolone-5-propanoate + H2O = N-formimidoyl-L-glutamate. It functions in the pathway amino-acid degradation; L-histidine degradation into L-glutamate; N-formimidoyl-L-glutamate from L-histidine: step 3/3. In Bos taurus (Bovine), this protein is Probable imidazolonepropionase (AMDHD1).